Here is a 276-residue protein sequence, read N- to C-terminus: Undecaprenyl-diphosphatase (276 aa).

Transmembrane regions (helical) follow at residues 46 to 66 (AGASFAAVIQLGSLGAVLIYF), 94 to 114 (LMGILVGTLPIVIAGWAVKAI), 122 to 142 (LWVVAAAAIGLALALGWAERV), 152 to 172 (LGIGDGLWVGLAQALALIPGV), 196 to 216 (SFLLGIPALFLAGVAEFIAEF), 226 to 246 (LGTLSAFVFSYGSIDWLIRFL), and 253 to 273 (VFIVYRIGFGLFIFLGLALGF).

The protein belongs to the UppP family.

Its subcellular location is the cell inner membrane. The catalysed reaction is di-trans,octa-cis-undecaprenyl diphosphate + H2O = di-trans,octa-cis-undecaprenyl phosphate + phosphate + H(+). In terms of biological role, catalyzes the dephosphorylation of undecaprenyl diphosphate (UPP). Confers resistance to bacitracin. This chain is Undecaprenyl-diphosphatase, found in Synechococcus sp. (strain JA-3-3Ab) (Cyanobacteria bacterium Yellowstone A-Prime).